The following is a 145-amino-acid chain: Aspartate 1-decarboxylase (145 aa).

Serine 25 acts as the Schiff-base intermediate with substrate; via pyruvic acid in catalysis. Serine 25 bears the Pyruvic acid (Ser) mark. Residue threonine 57 participates in substrate binding. The active-site Proton donor is tyrosine 58. 73–75 provides a ligand contact to substrate; it reads GAA.

The protein belongs to the PanD family. Heterooctamer of four alpha and four beta subunits. Pyruvate serves as cofactor. In terms of processing, is synthesized initially as an inactive proenzyme, which is activated by self-cleavage at a specific serine bond to produce a beta-subunit with a hydroxyl group at its C-terminus and an alpha-subunit with a pyruvoyl group at its N-terminus.

The protein resides in the cytoplasm. The enzyme catalyses L-aspartate + H(+) = beta-alanine + CO2. It participates in cofactor biosynthesis; (R)-pantothenate biosynthesis; beta-alanine from L-aspartate: step 1/1. Catalyzes the pyruvoyl-dependent decarboxylation of aspartate to produce beta-alanine. This chain is Aspartate 1-decarboxylase, found in Micrococcus luteus (strain ATCC 4698 / DSM 20030 / JCM 1464 / CCM 169 / CCUG 5858 / IAM 1056 / NBRC 3333 / NCIMB 9278 / NCTC 2665 / VKM Ac-2230) (Micrococcus lysodeikticus).